Here is a 529-residue protein sequence, read N- to C-terminus: Berberine bridge enzyme-like 7 (529 aa).

An N-terminal signal peptide occupies residues 1-19 (MKEALSILCLALLVSVSEA). An intrachain disulfide couples Cys-32 to Cys-95. An N-linked (GlcNAc...) asparagine glycan is attached at Asn-52. The 179-residue stretch at 69-247 (YSSPNFKKLL…LSWKINLVKV (179 aa)) folds into the FAD-binding PCMH-type domain. Positions 110–172 (HDLEGLSYRS…QTLAFPAGVC (63 aa)) form a cross-link, 6-(S-cysteinyl)-8alpha-(pros-histidyl)-FAD (His-Cys). 3 N-linked (GlcNAc...) asparagine glycosylation sites follow: Asn-257, Asn-341, and Asn-439.

Belongs to the oxygen-dependent FAD-linked oxidoreductase family. Requires FAD as cofactor. The FAD cofactor is bound via a bicovalent 6-S-cysteinyl, 8alpha-N1-histidyl FAD linkage.

It localises to the secreted. The protein resides in the cell wall. In terms of biological role, probable flavin-dependent oxidoreductase. This chain is Berberine bridge enzyme-like 7, found in Arabidopsis thaliana (Mouse-ear cress).